A 271-amino-acid polypeptide reads, in one-letter code: MDDRLTIFIISDSLGVTARTIAKACIQQFPNHDNWQFERYSNINNKELLDKVLEKAKDKNVCLMFSLVDDDLARYAQERSEEEHFVYVDLLSNVIKAMSKLSGVEPLGQPGLLRKLDKHYFKRVEAIEFAVKYDDGKDPRGILKADLILLGISRTSKTPLSMYLADKHLKVVNIPIVPEVPLPKELNEVSPKKIVGLTNSVERLSQVRKERLRSLGVSGTASYANKDRIYEEAAYAEEVMRKLKCPIINVSDKAIEETATIILEMIKENQL.

Residue 151–158 participates in ADP binding; sequence GISRTSKT.

This sequence belongs to the pyruvate, phosphate/water dikinase regulatory protein family. PDRP subfamily.

The catalysed reaction is N(tele)-phospho-L-histidyl/L-threonyl-[pyruvate, phosphate dikinase] + ADP = N(tele)-phospho-L-histidyl/O-phospho-L-threonyl-[pyruvate, phosphate dikinase] + AMP + H(+). It carries out the reaction N(tele)-phospho-L-histidyl/O-phospho-L-threonyl-[pyruvate, phosphate dikinase] + phosphate + H(+) = N(tele)-phospho-L-histidyl/L-threonyl-[pyruvate, phosphate dikinase] + diphosphate. Bifunctional serine/threonine kinase and phosphorylase involved in the regulation of the pyruvate, phosphate dikinase (PPDK) by catalyzing its phosphorylation/dephosphorylation. This is Putative pyruvate, phosphate dikinase regulatory protein from Streptococcus uberis (strain ATCC BAA-854 / 0140J).